A 160-amino-acid polypeptide reads, in one-letter code: MIHLDYQVAAEEVDEAELPTYEQCLKWVEVALLDDRLDGETELTIRIVDEDEIQTLNRDYRGKDQTTNVLSFPFENPPVLVDLGEELPYIGDLVICAQVVAQEAKAQHKPLEAHWAHMVIHGCLHLQGMDHVDDDEAIKMEALEAEILADLGYDSPYESD.

Residues His121, His125, and His131 each contribute to the Zn(2+) site.

This sequence belongs to the endoribonuclease YbeY family. Zn(2+) is required as a cofactor.

It localises to the cytoplasm. Functionally, single strand-specific metallo-endoribonuclease involved in late-stage 70S ribosome quality control and in maturation of the 3' terminus of the 16S rRNA. This is Endoribonuclease YbeY from Hydrogenovibrio crunogenus (strain DSM 25203 / XCL-2) (Thiomicrospira crunogena).